Consider the following 165-residue polypeptide: MAKKPKSVKDTNNMVVASNRKARHNYSILETYEAGVALVGTEVKSLRDGTASLADAFATVDDGEIWLRNLHIPEYHHGSWTNHAPRRNRKLLMHRREIDNLVGKIRDGNLTLVPLSLYFTGGKVKVELALARGKQAHDKRQDMARRDAQREVTRELGRRVKGMTN.

A compositionally biased stretch (basic and acidic residues) spans 135–158; it reads QAHDKRQDMARRDAQREVTRELGR. A disordered region spans residues 135–165; sequence QAHDKRQDMARRDAQREVTRELGRRVKGMTN.

The protein belongs to the SmpB family.

The protein resides in the cytoplasm. Functionally, required for rescue of stalled ribosomes mediated by trans-translation. Binds to transfer-messenger RNA (tmRNA), required for stable association of tmRNA with ribosomes. tmRNA and SmpB together mimic tRNA shape, replacing the anticodon stem-loop with SmpB. tmRNA is encoded by the ssrA gene; the 2 termini fold to resemble tRNA(Ala) and it encodes a 'tag peptide', a short internal open reading frame. During trans-translation Ala-aminoacylated tmRNA acts like a tRNA, entering the A-site of stalled ribosomes, displacing the stalled mRNA. The ribosome then switches to translate the ORF on the tmRNA; the nascent peptide is terminated with the 'tag peptide' encoded by the tmRNA and targeted for degradation. The ribosome is freed to recommence translation, which seems to be the essential function of trans-translation. The chain is SsrA-binding protein from Mycolicibacterium gilvum (strain PYR-GCK) (Mycobacterium gilvum (strain PYR-GCK)).